The following is a 551-amino-acid chain: Thermolysin (551 aa).

The first 31 residues, 1–31 (MKRKMKMKLVRFGLAAGLAAQVFFLPYNALA), serve as a signal peptide directing secretion. Residues 32–235 (STEHVTWNQQ…DAAKPGDVKS (204 aa)) constitute a propeptide, activation peptide. Ca(2+) contacts are provided by Asp292, Asp294, Gln296, and Asp373. Residue His377 coordinates Zn(2+). Glu378 is a catalytic residue. Residues His381 and Glu401 each contribute to the Zn(2+) site. Residues Glu412, Asn418, Asp420, Glu422, Glu425, Thr429, Ile432, and Asp435 each contribute to the Ca(2+) site. His466 serves as the catalytic Proton donor.

The protein belongs to the peptidase M4 family. It depends on Ca(2+) as a cofactor. Zn(2+) serves as cofactor.

It is found in the secreted. The enzyme catalyses Preferential cleavage: Xaa-|-Leu &gt; Xaa-|-Phe.. Functionally, extracellular zinc metalloprotease. The polypeptide is Thermolysin (nprS) (Geobacillus stearothermophilus (Bacillus stearothermophilus)).